The chain runs to 87 residues: Cell division protein FtsL (87 aa).

Residues 1–3 are Cytoplasmic-facing; that stretch reads MSR. Residues 4–23 traverse the membrane as a helical segment; it reads LLLIVLLACSIASAIGVVYM. Residues 24–87 lie on the Periplasmic side of the membrane; sequence RHMHRKLFVQ…ETSDIVVIRP (64 aa).

Belongs to the FtsL family. As to quaternary structure, part of a complex composed of FtsB, FtsL and FtsQ.

It localises to the cell inner membrane. Essential cell division protein. May link together the upstream cell division proteins, which are predominantly cytoplasmic, with the downstream cell division proteins, which are predominantly periplasmic. The protein is Cell division protein FtsL of Xanthomonas campestris pv. campestris (strain ATCC 33913 / DSM 3586 / NCPPB 528 / LMG 568 / P 25).